Consider the following 156-residue polypeptide: Transcription antitermination protein NusB (156 aa).

It belongs to the NusB family.

Involved in transcription antitermination. Required for transcription of ribosomal RNA (rRNA) genes. Binds specifically to the boxA antiterminator sequence of the ribosomal RNA (rrn) operons. This is Transcription antitermination protein NusB from Mycolicibacterium paratuberculosis (strain ATCC BAA-968 / K-10) (Mycobacterium paratuberculosis).